We begin with the raw amino-acid sequence, 433 residues long: MSKIVKVLGREIIDSRGNPTVEAEVHLEGGFVGMAAAPSGASTGSREALELRDGDKARFLGKGVLKAIEAVNGAIADALVGKDAKDQAAIDAIMIELDGTENKSKFGANAILAVSLANAKAAAASKGMPLYEHIAELNGTAGQFSMPLPMMNIINGGEHADNNVDIQEFMIQPVGAKTLKEAVRMGAEVFHNLAKVLKSKGYNTAVGDEGGFAPNLKSNAEALEVIAEAVAAAGYVLGKDVTLAMDCAASEFFDKEAGIYNMKGEGKTFTSEEFNHYLAGLVEQFPIVSIEDGLDESDWAGFAHQTQLLGDKIQLVGDDLFVTNTKILAEGIEKGIANSILIKFNQIGSLTETLAAIKMAKDAGYTAVISHRSGETEDATIADLAVGTAAGQIKTGSMSRSDRVAKYNQLIRIEEALGERAPFNGLKEVKGQA.

Gln-167 contributes to the (2R)-2-phosphoglycerate binding site. Glu-209 acts as the Proton donor in catalysis. Asp-246, Glu-291, and Asp-318 together coordinate Mg(2+). Positions 343, 372, 373, and 394 each coordinate (2R)-2-phosphoglycerate. Lys-343 (proton acceptor) is an active-site residue.

The protein belongs to the enolase family. As to quaternary structure, component of the RNA degradosome, a multiprotein complex involved in RNA processing and mRNA degradation. It depends on Mg(2+) as a cofactor.

Its subcellular location is the cytoplasm. It is found in the secreted. The protein resides in the cell surface. It catalyses the reaction (2R)-2-phosphoglycerate = phosphoenolpyruvate + H2O. It functions in the pathway carbohydrate degradation; glycolysis; pyruvate from D-glyceraldehyde 3-phosphate: step 4/5. Functionally, catalyzes the reversible conversion of 2-phosphoglycerate (2-PG) into phosphoenolpyruvate (PEP). It is essential for the degradation of carbohydrates via glycolysis. This is Enolase from Vibrio vulnificus (strain YJ016).